Reading from the N-terminus, the 106-residue chain is NADH dehydrogenase [ubiquinone] 1 beta subcomplex subunit 10-B (106 aa).

A disordered region spans residues 1–25 (MGRKKGLPEFEESAPDGFDPENPYK).

The protein belongs to the complex I NDUFB10 subunit family. Complex I is composed of at least 49 different subunits.

The protein resides in the mitochondrion inner membrane. Functionally, accessory subunit of the mitochondrial membrane respiratory chain NADH dehydrogenase (Complex I), that is believed not to be involved in catalysis. Complex I functions in the transfer of electrons from NADH to the respiratory chain. The immediate electron acceptor for the enzyme is believed to be ubiquinone. This chain is NADH dehydrogenase [ubiquinone] 1 beta subcomplex subunit 10-B, found in Arabidopsis thaliana (Mouse-ear cress).